The following is a 258-amino-acid chain: GTP cyclohydrolase FolE2 (258 aa).

It belongs to the GTP cyclohydrolase IV family.

The enzyme catalyses GTP + H2O = 7,8-dihydroneopterin 3'-triphosphate + formate + H(+). The protein operates within cofactor biosynthesis; 7,8-dihydroneopterin triphosphate biosynthesis; 7,8-dihydroneopterin triphosphate from GTP: step 1/1. Its function is as follows. Converts GTP to 7,8-dihydroneopterin triphosphate. This Geobacter sulfurreducens (strain ATCC 51573 / DSM 12127 / PCA) protein is GTP cyclohydrolase FolE2.